Consider the following 2412-residue polypeptide: MKRKGMNTKLRLSPSEEAFILKEDYERRRKLRLLQVREQERGIAFQIREGIKQRRSQQVSHLAEELRAKWEEAQSQKIQNLEKLYLASLRHMGDGHRQAKENEPDLDALSRRAAERKRKAEVRHKEALKVQKNQKEMLMKQKTRHIKARKEAVLVEKQRSAKMARLPPPVPSPFENIDVNRIPSLKTNSSTYHHISTFVSRQMGTKQPDAHLAAEEEARRVERLRKQAAQERVKQFERAHVRGSQAMKKIHLAQNQERLMEELKQLQKEDLARRRQTVAQMPPQMLELPYRRSEMKEDRQRELEFAFEDMYNADRKVKGNLILHLKPEPLPTISDQLQDEELDLSMEQENQVPLAAKIQQIPSRILFKRLLNKIRSQKSLWTIKSVSEDEGEVTSSIIEIESKVPSVDSGAIITEERTAASFEQEQVTDSDRLTIESGPLSSEDKPLYYKAGTGREQAMAVSPPATAVAQSSVLLHPQEEAVRIRMSLRRKQIMEIEEQKQKQLELLEQIEQQKLRLETDCFRAQLEEQRKQADQPEVCCAPMSHAMISDEDSHRQMIRNYQHQLLQQNRLHKETVETARKRLLEYQTVLKERSPSLSASALVPDSVVSGPPQQSYKPAAASDSWDPSQRLKLSPSKYQPVQPSQIPALEQSHIQVPRHGHITQRQGKMAVSEMLGKQPVESQERQWQFSQVETHQGDYEFVLKDSHSLSRTLSYVRPQTLQDAREVSKPPRVIICQSLDSQQISSEDSENISSKPSEPSPFLPLVPERPFTSLPVKFHSGTIHKPFTTINQSVISQMHDQPLSSSETITAQQGDLRFLQEQLELQKKVLQARQEAREKLLLCTQKELGQQTGLPVFLPSPAGNIFSSLPSASAESGNFQTSSTKSDATVSSDNMDRLWDSSQPISSQQTHLEFLQEQSSVETDNLQARREAQEVLFAHTQNTLEKIVRSEQAGSSLPHQVAQQSFSSLTLADTQSKKIQKQPLPANKKGLLPSQSEVSKAQDGSSGFLQQTLPLQNTLKLLQEQLTRQRSMIPPRRDGQETLLLYKESCSEDSEAGPVESLSSVVVQHADASRAVSEVPKRLQDVYSSEEENRVLSSHLITHGFPQHSLQRQEHFTPLQEETHIQRLILGARKNNEEFAPKQNELEKGLCSQQTDALSSPSQVTDWGTSRGSVSVRSDRTDPLRHFKIPAFRERLVRVSQHTFPLQDNLQEHQEWVDTEKESFQSSPLTPENPSSQQTGFSSFKASLRLPSCVSLPSADSGITQHPLSTESDSKVKSSHLQIPELQHRLSKISQLIPPQQDSLKALQEQLATQREAIIHSRQEAHEETLREWKEKIFPEQVGPFSPLIPQHSLASFPVSDTERAQELCSTNSDTISSGYPEMLELPDRTLGLSHTALPQQNNLTAHPEHLHAQTNFFHSTEKAQEGLVFPRPCQFEEMSAEHFIQPQHDDLKALQQQLDMQREAIRSGQEMQEKMLLQRLNKLEQRISSKQISSSLFSSQVALPIANSDGTLQSFPTKSNETELLGSQDEYLSFSQPRLPLQNNMTEQLDLEKVFHKELLLHKQKSQNKSESSEHSLPPLFLSKEIEHPFISLPFAESKSKSICELYLSDKKHAAPNDAVIPRLQDRLLSCSQPVLTQQDNMSLQKQLNLQRETLHSRQKAQEELLVQRQTSLQQQIQRHRETLKNFFNVSQARNPTDENDLEMQKREQLGGWFPHTQGLTWGDAGQGSANGEQPRADVHAEHNGESLAKELSGRASKPPVSKVKCVLDLNQHELSTIQEVESPASGRISMPGKAEFYQDRDPLRVSVSREQSFLESPLAHDPFGCHQPPAQENSKSHDDNAEAVKVKKSDVEDHAVLSHAVSKEEACTNLGPLGKPDDEAETQEISQEPLSSVTVSTGSFLSYEITDLSLTDPESFSEQTEHLEQESTNKQEETDPLSIAVPSVIYQQQHSLGAHNSLLPMEEESTSDHTHVQQIMDNDVNEANLIPDKRDFQVPAVDLDFRELEHIFPHLHRQLFKPLEPHLDFDLSSPGTSQEDSDFYQSSESSSEKHVKALSTGTICFPALTAKSHSPNPRLNQLDINLAHATTEGSEQSFQQLRPEFSSQESQHADLPSIYSIEARGPSQRMENQNYSEMLQNKKKSLSLQPSTEDLTPACSSSDTALFDQLHLQHSTPCASVSSECSVKLLESREEVLGFEELSRRAVTMSQRLTEDENVVLPINPHVGRVEKEASVQGSNPLSIQNEKPIQNFIETDTTEAVGNVCQLAQAEHILKSCPFRSPIPIWETDTGYGIMEEPDLTLVSNSDISITETDLANLTLEDREDNEAQFFQAGVVLPTSSMETSVCGAVSEPYVDQPTVAPSATSGSLQEAFMTRQTLTERSYQRQREIWNKTRLPQTKVSKEKLPTGCTGS.

Positions 1–540 (MKRKGMNTKL…KQADQPEVCC (540 aa)) are necessary for centriole targeting and microtubule association. Ser-13 is subject to Phosphoserine. Coiled-coil stretches lie at residues 63 to 84 (AEEL…LEKL), 114 to 134 (AERK…QKNQ), 209 to 273 (DAHL…DLAR), 489 to 535 (RRKQ…QADQ), and 563 to 592 (HQLL…VLKE). Disordered regions lie at residues 600–641 (SALV…YQPV) and 739–762 (LDSQ…PSPF). Ser-634 bears the Phosphoserine mark. Polar residues predominate over residues 739–757 (LDSQQISSEDSENISSKPS). Residues 811–841 (AQQGDLRFLQEQLELQKKVLQARQEAREKLL) are a coiled coil. Disordered stretches follow at residues 871–891 (SASA…ATVS), 973–1005 (DTQS…QDGS), 1158–1178 (LSSP…SVRS), and 1216–1240 (WVDT…QQTG). Polar residues-rich tracts occupy residues 993–1005 (PSQS…QDGS), 1158–1176 (LSSP…SVSV), and 1224–1240 (FQSS…QQTG). 2 coiled-coil regions span residues 1300 to 1327 (QQDS…EAHE) and 1448 to 1493 (QHDD…SKQI). Ser-1573 carries the post-translational modification Phosphoserine. Disordered stretches follow at residues 1820 to 1895 (LAHD…LSSV), 1916 to 1937 (ESFS…EETD), 2028 to 2048 (DLSS…SESS), and 2089 to 2111 (TEGS…SQHA). A compositionally biased stretch (basic and acidic residues) spans 1836-1868 (SKSHDDNAEAVKVKKSDVEDHAVLSHAVSKEEA). Residues 1885–1895 (QEISQEPLSSV) show a composition bias toward polar residues. Over residues 1921-1935 (QTEHLEQESTNKQEE) the composition is skewed to basic and acidic residues. Positions 2089-2108 (TEGSEQSFQQLRPEFSSQES) are enriched in polar residues. Positions 2367–2412 (SLQEAFMTRQTLTERSYQRQREIWNKTRLPQTKVSKEKLPTGCTGS) are ALMS motif.

As to quaternary structure, interacts (via ALMS motif) with microtubules; this interaction is direct.

It localises to the cytoplasm. The protein localises to the cytoskeleton. Its subcellular location is the microtubule organizing center. It is found in the centrosome. The protein resides in the centriole. It localises to the spindle. Centriole-enriched microtubule-binding protein involved in centriole biogenesis. Essential for the generation of the distal portion of new-born centrioles in a CPAP- and CEP120-mediated elongation dependent manner during the cell cycle S/G2 phase after formation of the initiating cartwheel structure. Required for the recruitment of centriolar proteins, such as POC1B, POC5 and CEP135, into the distal portion of centrioles. Also required for centriole-to-centrosome conversion during mitotic progression, but is dispensable for cartwheel removal or centriole disengagement. Binds to and stabilizes centriolar microtubule. May be involved in ciliogenesis. The protein is Centrosomal protein of 295 kDa of Mus musculus (Mouse).